The chain runs to 130 residues: Histidine triad nucleotide-binding protein 1 (130 aa).

In terms of domain architecture, HIT spans 22–130 (LFGKIIRKEI…GGRQLQWPPG (109 aa)). Residues 114–118 (HLHLH) carry the Histidine triad motif motif.

The sequence is that of Histidine triad nucleotide-binding protein 1 (hint-1) from Caenorhabditis elegans.